Here is a 99-residue protein sequence, read N- to C-terminus: Small integral membrane protein 14 (99 aa).

Residues 1 to 49 (MAEGGFDPCECICSHEHAMRRLINLLRQSQSYCTDTECLRELPGPSGDS) are Lumenal-facing. A helical transmembrane segment spans residues 50–70 (GISITVILMAWMVIAVLLFLL). Residues 71–99 (RPPNLRGSSLPGKPSSPHSGQDPPAPPVD) lie on the Cytoplasmic side of the membrane. The tract at residues 77–99 (GSSLPGKPSSPHSGQDPPAPPVD) is disordered.

It localises to the endoplasmic reticulum membrane. The protein is Small integral membrane protein 14 (Smim14) of Rattus norvegicus (Rat).